The primary structure comprises 132 residues: D-ribose pyranase (132 aa).

Catalysis depends on histidine 20, which acts as the Proton donor. Substrate contacts are provided by residues aspartate 28, histidine 99, and 121-123 (YSN).

The protein belongs to the RbsD / FucU family. RbsD subfamily. Homodecamer.

The protein localises to the cytoplasm. It carries out the reaction beta-D-ribopyranose = beta-D-ribofuranose. It participates in carbohydrate metabolism; D-ribose degradation; D-ribose 5-phosphate from beta-D-ribopyranose: step 1/2. Functionally, catalyzes the interconversion of beta-pyran and beta-furan forms of D-ribose. In Pseudomonas putida (strain W619), this protein is D-ribose pyranase.